The chain runs to 311 residues: Pyrimidine-specific ribonucleoside hydrolase RihA (311 aa).

His240 is a catalytic residue.

This sequence belongs to the IUNH family. RihA subfamily.

Functionally, hydrolyzes cytidine or uridine to ribose and cytosine or uracil, respectively. The protein is Pyrimidine-specific ribonucleoside hydrolase RihA of Salmonella paratyphi C (strain RKS4594).